A 202-amino-acid chain; its full sequence is MADS-box transcription factor 33 (202 aa).

The MADS-box domain maps to 1–61 (MVRGKVQMRR…GKLHELATNG (61 aa)). The region spanning 87–177 (QQVAEQGIFL…QEKVKEQQKL (91 aa)) is the K-box domain.

In terms of tissue distribution, expressed in seedling roots.

Its subcellular location is the nucleus. Its function is as follows. Probable transcription factor. This is MADS-box transcription factor 33 (MADS33) from Oryza sativa subsp. japonica (Rice).